Here is a 314-residue protein sequence, read N- to C-terminus: Olfactory receptor 5I1 (314 aa).

Over methionine 1–isoleucine 27 the chain is Extracellular. A glycan (N-linked (GlcNAc...) asparagine) is linked at asparagine 7. A helical transmembrane segment spans residues valine 28 to methionine 48. Over leucine 49–histidine 56 the chain is Cytoplasmic. Residues leucine 57–serine 77 traverse the membrane as a helical segment. Topologically, residues aspartate 78–leucine 101 are extracellular. Cysteine 99 and cysteine 191 are disulfide-bonded. A helical transmembrane segment spans residues glutamine 102–tyrosine 122. Residues aspartate 123–glycine 141 are Cytoplasmic-facing. Residues isoleucine 142–threonine 162 form a helical membrane-spanning segment. Residues serine 163 to glutamate 198 are Extracellular-facing. The helical transmembrane segment at tryptophan 199–serine 219 threads the bilayer. The Cytoplasmic segment spans residues tyrosine 220 to threonine 239. The chain crosses the membrane as a helical span at residues phenylalanine 240–isoleucine 260. The Extracellular portion of the chain corresponds to tyrosine 261–aspartate 273. The chain crosses the membrane as a helical span at residues lysine 274–leucine 294. Residues arginine 295–serine 314 lie on the Cytoplasmic side of the membrane.

The protein belongs to the G-protein coupled receptor 1 family.

It localises to the cell membrane. Odorant receptor. This Homo sapiens (Human) protein is Olfactory receptor 5I1 (OR5I1).